The chain runs to 333 residues: Ketol-acid reductoisomerase (NADP(+)) (333 aa).

One can recognise a KARI N-terminal Rossmann domain in the interval 6 to 186 (TRVYTECDAD…GALRAGAIQT (181 aa)). NADP(+) is bound by residues 29 to 32 (YGSQ), K52, S55, S57, and 87 to 90 (DPAQ). H112 is an active-site residue. G138 contacts NADP(+). Positions 187-332 (TFTEETETDL…ARLRALFSWS (146 aa)) constitute a KARI C-terminal knotted domain. Residues D195, E199, E231, and E235 each contribute to the Mg(2+) site. S256 serves as a coordination point for substrate.

The protein belongs to the ketol-acid reductoisomerase family. Mg(2+) is required as a cofactor.

The enzyme catalyses (2R)-2,3-dihydroxy-3-methylbutanoate + NADP(+) = (2S)-2-acetolactate + NADPH + H(+). It carries out the reaction (2R,3R)-2,3-dihydroxy-3-methylpentanoate + NADP(+) = (S)-2-ethyl-2-hydroxy-3-oxobutanoate + NADPH + H(+). The protein operates within amino-acid biosynthesis; L-isoleucine biosynthesis; L-isoleucine from 2-oxobutanoate: step 2/4. It participates in amino-acid biosynthesis; L-valine biosynthesis; L-valine from pyruvate: step 2/4. Involved in the biosynthesis of branched-chain amino acids (BCAA). Catalyzes an alkyl-migration followed by a ketol-acid reduction of (S)-2-acetolactate (S2AL) to yield (R)-2,3-dihydroxy-isovalerate. In the isomerase reaction, S2AL is rearranged via a Mg-dependent methyl migration to produce 3-hydroxy-3-methyl-2-ketobutyrate (HMKB). In the reductase reaction, this 2-ketoacid undergoes a metal-dependent reduction by NADPH to yield (R)-2,3-dihydroxy-isovalerate. The sequence is that of Ketol-acid reductoisomerase (NADP(+)) from Tropheryma whipplei (strain Twist) (Whipple's bacillus).